Here is a 490-residue protein sequence, read N- to C-terminus: Lignostilbene-alpha,beta-dioxygenase isozyme III (490 aa).

Fe cation-binding residues include His167, His218, His285, and His477.

It belongs to the carotenoid oxygenase family. Homodimer of two beta subunits. Fe(2+) is required as a cofactor.

It catalyses the reaction 1,2-bis(4-hydroxy-3-methoxyphenyl)ethylene + O2 = 2 vanillin. Activity is high with beta-5 type stilbene and minimal with beta-1 type stilbene. A 4-hydroxyl group and trans-stilbene structure is essential for the binding of substrates to the enzyme. Its function is as follows. Catalyzes the cleavage of the interphenyl double bond (C alpha-C beta) of lignin-derived polyphenolic diaryl-propane type compounds (Stilbene). The protein is Lignostilbene-alpha,beta-dioxygenase isozyme III of Sphingomonas paucimobilis (Pseudomonas paucimobilis).